Here is a 578-residue protein sequence, read N- to C-terminus: Thiol:disulfide interchange protein DsbD (578 aa).

The signal sequence occupies residues methionine 1–alanine 24. Disulfide bonds link cysteine 134-cysteine 140 and cysteine 195-cysteine 317. 9 helical membrane passes run alanine 183–isoleucine 203, isoleucine 219–leucine 239, tyrosine 256–tyrosine 276, glycine 297–cysteine 317, threonine 318–glycine 338, glycine 339–phenylalanine 359, tryptophan 370–leucine 390, valine 397–leucine 417, and alanine 421–alanine 441. The Thioredoxin domain occupies leucine 438–arginine 578. Cysteine 493 and cysteine 496 are oxidised to a cystine.

It belongs to the thioredoxin family. DsbD subfamily.

The protein localises to the cell inner membrane. The enzyme catalyses [protein]-dithiol + NAD(+) = [protein]-disulfide + NADH + H(+). The catalysed reaction is [protein]-dithiol + NADP(+) = [protein]-disulfide + NADPH + H(+). In terms of biological role, required to facilitate the formation of correct disulfide bonds in some periplasmic proteins and for the assembly of the periplasmic c-type cytochromes. Acts by transferring electrons from cytoplasmic thioredoxin to the periplasm. This transfer involves a cascade of disulfide bond formation and reduction steps. This is Thiol:disulfide interchange protein DsbD from Yersinia enterocolitica serotype O:8 / biotype 1B (strain NCTC 13174 / 8081).